A 386-amino-acid chain; its full sequence is Peroxisomal membrane protein PEX13 (386 aa).

Positions 1–76 (MSSTAVPRPK…SSGTYGESNT (76 aa)) are disordered. Residues 1–263 (MSSTAVPRPK…KATRRKISWK (263 aa)) lie on the Lumenal side of the membrane. The span at 23–39 (RNAQSLSAMMTSNQQDS) shows a compositional bias: polar residues. Residues 44–55 (ESNNSNSASESA) are compositionally biased toward low complexity. Residues 65 to 76 (LNSSGTYGESNT) are compositionally biased toward polar residues. A helical membrane pass occupies residues 264-280 (PLLFFLMAVFGFPYLLN). Residues 281–386 (KFITKLQTSG…EHVDDETRTH (106 aa)) lie on the Cytoplasmic side of the membrane. Positions 306–372 (SKLEFARALY…PYNYIEIIKR (67 aa)) constitute an SH3 domain.

The protein belongs to the peroxin-13 family. As to quaternary structure, interacts (via SH3 domain) with PEX14 (via SH3-binding motif); forming the PEX13-PEX14 docking complex.

Its subcellular location is the peroxisome membrane. Functionally, component of the PEX13-PEX14 docking complex, a translocon channel that specifically mediates the import of peroxisomal cargo proteins bound to PEX5 or PEX21 receptors. The PEX13-PEX14 docking complex forms a large import pore which can be opened to a diameter of about 9 nm. Mechanistically, PEX5 (or PEX21) receptor along with cargo proteins associates with the PEX14 subunit of the PEX13-PEX14 docking complex in the cytosol, leading to the insertion of the receptor into the organelle membrane with the concomitant translocation of the cargo into the peroxisome matrix. The polypeptide is Peroxisomal membrane protein PEX13 (Saccharomyces cerevisiae (strain ATCC 204508 / S288c) (Baker's yeast)).